A 145-amino-acid chain; its full sequence is Deoxyuridine 5'-triphosphate nucleotidohydrolase (145 aa).

Residues 63–65 (RSG), asparagine 76, and 80–82 (TID) each bind substrate.

It belongs to the dUTPase family. It depends on Mg(2+) as a cofactor.

The enzyme catalyses dUTP + H2O = dUMP + diphosphate + H(+). Its pathway is pyrimidine metabolism; dUMP biosynthesis; dUMP from dCTP (dUTP route): step 2/2. Its function is as follows. This enzyme is involved in nucleotide metabolism: it produces dUMP, the immediate precursor of thymidine nucleotides and it decreases the intracellular concentration of dUTP so that uracil cannot be incorporated into DNA. In Chlamydia pneumoniae (Chlamydophila pneumoniae), this protein is Deoxyuridine 5'-triphosphate nucleotidohydrolase.